A 510-amino-acid chain; its full sequence is UDP-N-acetylmuramoyl-tripeptide--D-alanyl-D-alanine ligase (510 aa).

Position 136–142 (136–142 (GSSGKTS)) interacts with ATP.

It belongs to the MurCDEF family. MurF subfamily.

The protein resides in the cytoplasm. The enzyme catalyses D-alanyl-D-alanine + UDP-N-acetyl-alpha-D-muramoyl-L-alanyl-gamma-D-glutamyl-meso-2,6-diaminopimelate + ATP = UDP-N-acetyl-alpha-D-muramoyl-L-alanyl-gamma-D-glutamyl-meso-2,6-diaminopimeloyl-D-alanyl-D-alanine + ADP + phosphate + H(+). The protein operates within cell wall biogenesis; peptidoglycan biosynthesis. In terms of biological role, involved in cell wall formation. Catalyzes the final step in the synthesis of UDP-N-acetylmuramoyl-pentapeptide, the precursor of murein. The chain is UDP-N-acetylmuramoyl-tripeptide--D-alanyl-D-alanine ligase from Mycobacterium bovis (strain ATCC BAA-935 / AF2122/97).